A 716-amino-acid chain; its full sequence is Protein C-mannosyl-transferase DPY19L3 (716 aa).

Residues 1 to 43 lie on the Cytoplasmic side of the membrane; the sequence is MMSIRQRREIRATEVSEDFPAQEENVKLENKLPSGCTSRRLWK. The chain crosses the membrane as a helical span at residues 44 to 64; the sequence is ILSLTIGGTIALCIGLLTSVY. At 65–154 the chain is on the lumenal side; it reads LATLHENDLW…RVLPVQKYLE (90 aa). Asparagine 118 is a glycosylation site (N-linked (GlcNAc...) asparagine). Residues 155–182 form a helical membrane-spanning segment; that stretch reads PVYFYIYTLFGLQAIYVTALYITSWLLS. Residues 183-184 are Cytoplasmic-facing; that stretch reads GT. The name=3 intramembrane region spans 185–197; the sequence is WLSGLLAAFWYVT. The Cytoplasmic portion of the chain corresponds to 198–215; that stretch reads NRIDTTRVEFTIPLRENW. The segment at residues 216-230 is an intramembrane region (name=4); the sequence is ALPFFAIQIAAITYF. At 231-239 the chain is on the cytoplasmic side; it reads LRPNLQPLS. Residues 240–256 traverse the membrane as a helical segment; that stretch reads ERLTLLAIFISTFLFSL. Residues 257–262 are Lumenal-facing; sequence TWQFNQ. The chain crosses the membrane as a helical span at residues 263–279; that stretch reads FMMLMQALVLFTLDSLD. At 280-289 the chain is on the cytoplasmic side; sequence MLPAVKATWL. The chain crosses the membrane as a helical span at residues 290–306; it reads YGIQITSLLLVCILQFF. Residues 307–308 lie on the Lumenal side of the membrane; the sequence is NS. The chain crosses the membrane as a helical span at residues 309 to 323; sequence MILGSLLISFNLSVF. At 324 to 338 the chain is on the cytoplasmic side; sequence IARKLQKNLKTGSFL. A helical membrane pass occupies residues 339–359; it reads NRLGKLLLHLFMVLCLTLFLN. The Lumenal segment spans residues 360-414; sequence NIIKKILNLKSDEHIFKFLKAKFGLGATRDFDANLYLCEEAFGLLPFNTFGRLSD. Residues 415–437 traverse the membrane as a helical segment; that stretch reads TLLFYAYIFVLSITVIVAFVVAF. Residues 438-465 are Cytoplasmic-facing; sequence HNLSDSTNQQSVGKMEKGTVDLKPETAY. Residues 466-485 form a helical membrane-spanning segment; it reads NLIHTILFGFLALSTMRMKY. Topologically, residues 486 to 487 are lumenal; the sequence is LW. The chain crosses the membrane as a helical span at residues 488 to 499; it reads TSHMCVFASFGL. Topologically, residues 500-522 are cytoplasmic; the sequence is CSPEIWELLLKSVHLYNPKRICI. Residues 523–539 form a helical membrane-spanning segment; it reads MRYSVPILILLYLCYKF. Topologically, residues 540–716 are lumenal; that stretch reads WPGMMDELSE…FHVYKLSRNK (177 aa). The N-linked (GlcNAc...) asparagine glycan is linked to asparagine 704.

Belongs to the dpy-19 family.

It localises to the endoplasmic reticulum membrane. It catalyses the reaction L-tryptophyl-[protein] + a di-trans,poly-cis-dolichyl beta-D-mannosyl phosphate = C-alpha-D-mannosyl-L-tryptophyl-[protein] + a di-trans,poly-cis-dolichyl phosphate + H(+). It participates in protein modification; protein glycosylation. C-mannosyltransferase that mediates C-mannosylation of tryptophan residues on target proteins. The reaction occurs on the luminal side of the endoplasmic reticulum and involves the transfer of a mannose unit from a dolichylphosphate mannose (Dol-P-Man) donor to an acceptor protein containing a WxxW or WxxC consensus sequence. C-mannosylates RSPO1, a Wnt signaling regulator, preferentially at the first Trp residue in the sequence WxxW. C-mannosylates the netrin receptor UNC5A, preferentially at the third tryptophan of WxxWxxWxxC sequence. In Pongo abelii (Sumatran orangutan), this protein is Protein C-mannosyl-transferase DPY19L3 (DPY19L3).